A 418-amino-acid polypeptide reads, in one-letter code: Voltage-gated ClC-type chloride channel ClcB (418 aa).

10 helical membrane-spanning segments follow: residues 5–25 (LLIA…FRHA), 54–74 (LLTP…WQKF), 146–166 (LWIA…PLAG), 168–188 (LFIA…PVII), 222–242 (ALII…LTLM), 258–278 (WQLA…PAVW), 291–311 (APPL…AVLA), 316–336 (GAPG…GMLY), 352–372 (LLLG…APIM), and 380–400 (MTGE…ASVI).

It belongs to the chloride channel (TC 2.A.49) family. ClcB subfamily.

Its subcellular location is the cell inner membrane. In terms of biological role, probably acts as an electrical shunt for an outwardly-directed proton pump that is linked to amino acid decarboxylation, as part of the extreme acid resistance (XAR) response. In Escherichia coli O127:H6 (strain E2348/69 / EPEC), this protein is Voltage-gated ClC-type chloride channel ClcB.